We begin with the raw amino-acid sequence, 139 residues long: Ribulose bisphosphate carboxylase small subunit (139 aa).

It belongs to the RuBisCO small chain family. Heterohexadecamer of 8 large and 8 small subunits.

The protein resides in the plastid. It is found in the chloroplast. Functionally, ruBisCO catalyzes two reactions: the carboxylation of D-ribulose 1,5-bisphosphate, the primary event in carbon dioxide fixation, as well as the oxidative fragmentation of the pentose substrate in the photorespiration process. Both reactions occur simultaneously and in competition at the same active site. Although the small subunit is not catalytic it is essential for maximal activity. The chain is Ribulose bisphosphate carboxylase small subunit from Chrysotila carterae (Marine alga).